The primary structure comprises 245 residues: 1-(5-phosphoribosyl)-5-[(5-phosphoribosylamino)methylideneamino] imidazole-4-carboxamide isomerase (245 aa).

The Proton acceptor role is filled by Asp-8. The Proton donor role is filled by Asp-131.

This sequence belongs to the HisA/HisF family.

It is found in the cytoplasm. The enzyme catalyses 1-(5-phospho-beta-D-ribosyl)-5-[(5-phospho-beta-D-ribosylamino)methylideneamino]imidazole-4-carboxamide = 5-[(5-phospho-1-deoxy-D-ribulos-1-ylimino)methylamino]-1-(5-phospho-beta-D-ribosyl)imidazole-4-carboxamide. It functions in the pathway amino-acid biosynthesis; L-histidine biosynthesis; L-histidine from 5-phospho-alpha-D-ribose 1-diphosphate: step 4/9. This is 1-(5-phosphoribosyl)-5-[(5-phosphoribosylamino)methylideneamino] imidazole-4-carboxamide isomerase from Verminephrobacter eiseniae (strain EF01-2).